The primary structure comprises 177 residues: ATP synthase subunit b, chloroplastic (177 aa).

The helical transmembrane segment at 22-42 (ILETNIINLAAVVGIVVFFVG) threads the bilayer.

The protein belongs to the ATPase B chain family. F-type ATPases have 2 components, F(1) - the catalytic core - and F(0) - the membrane proton channel. F(1) has five subunits: alpha(3), beta(3), gamma(1), delta(1), epsilon(1). F(0) has four main subunits: a(1), b(1), b'(1) and c(10-14). The alpha and beta chains form an alternating ring which encloses part of the gamma chain. F(1) is attached to F(0) by a central stalk formed by the gamma and epsilon chains, while a peripheral stalk is formed by the delta, b and b' chains.

Its subcellular location is the plastid. The protein localises to the chloroplast thylakoid membrane. Its function is as follows. F(1)F(0) ATP synthase produces ATP from ADP in the presence of a proton or sodium gradient. F-type ATPases consist of two structural domains, F(1) containing the extramembraneous catalytic core and F(0) containing the membrane proton channel, linked together by a central stalk and a peripheral stalk. During catalysis, ATP synthesis in the catalytic domain of F(1) is coupled via a rotary mechanism of the central stalk subunits to proton translocation. In terms of biological role, component of the F(0) channel, it forms part of the peripheral stalk, linking F(1) to F(0). This Oedogonium cardiacum (Filamentous green alga) protein is ATP synthase subunit b, chloroplastic.